The primary structure comprises 481 residues: 3-isopropylmalate dehydratase large subunit (481 aa).

[4Fe-4S] cluster-binding residues include Cys357, Cys417, and Cys420.

This sequence belongs to the aconitase/IPM isomerase family. LeuC type 1 subfamily. Heterodimer of LeuC and LeuD. It depends on [4Fe-4S] cluster as a cofactor.

The enzyme catalyses (2R,3S)-3-isopropylmalate = (2S)-2-isopropylmalate. It participates in amino-acid biosynthesis; L-leucine biosynthesis; L-leucine from 3-methyl-2-oxobutanoate: step 2/4. In terms of biological role, catalyzes the isomerization between 2-isopropylmalate and 3-isopropylmalate, via the formation of 2-isopropylmaleate. This chain is 3-isopropylmalate dehydratase large subunit, found in Mycolicibacterium gilvum (strain PYR-GCK) (Mycobacterium gilvum (strain PYR-GCK)).